Reading from the N-terminus, the 176-residue chain is Nascent polypeptide-associated complex subunit alpha (176 aa).

The NAC-A/B domain maps to 16–80; it reads PKNEKKAREL…AKVDDMNQRI (65 aa). Residues 83-110 form a disordered region; that stretch reads AQAAQAAETDAHAGHTHSHGEEDKSPEA. Residues 91–110 show a composition bias toward basic and acidic residues; sequence TDAHAGHTHSHGEEDKSPEA. The 38-residue stretch at 138 to 175 folds into the UBA domain; it reads LDAKDIDIIVEQTQVSRAKAVKALRKHDGDMVNAIMEL.

The protein belongs to the NAC-alpha family. Part of the nascent polypeptide-associated complex (NAC), consisting of EGD2 and EGD1. NAC associates with ribosomes via EGD1.

It localises to the cytoplasm. Its subcellular location is the nucleus. Functionally, component of the nascent polypeptide-associated complex (NAC), a dynamic component of the ribosomal exit tunnel, protecting the emerging polypeptides from interaction with other cytoplasmic proteins to ensure appropriate nascent protein targeting. The NAC complex also promotes mitochondrial protein import by enhancing productive ribosome interactions with the outer mitochondrial membrane and blocks the inappropriate interaction of ribosomes translating non-secretory nascent polypeptides with translocation sites in the membrane of the endoplasmic reticulum. EGD2 may also be involved in transcription regulation. The polypeptide is Nascent polypeptide-associated complex subunit alpha (EGD2) (Scheffersomyces stipitis (strain ATCC 58785 / CBS 6054 / NBRC 10063 / NRRL Y-11545) (Yeast)).